Here is a 340-residue protein sequence, read N- to C-terminus: Phosphoribosylformylglycinamidine cyclo-ligase (340 aa).

This sequence belongs to the AIR synthase family.

It localises to the cytoplasm. It carries out the reaction 2-formamido-N(1)-(5-O-phospho-beta-D-ribosyl)acetamidine + ATP = 5-amino-1-(5-phospho-beta-D-ribosyl)imidazole + ADP + phosphate + H(+). It functions in the pathway purine metabolism; IMP biosynthesis via de novo pathway; 5-amino-1-(5-phospho-D-ribosyl)imidazole from N(2)-formyl-N(1)-(5-phospho-D-ribosyl)glycinamide: step 2/2. The sequence is that of Phosphoribosylformylglycinamidine cyclo-ligase from Streptococcus pneumoniae serotype 4 (strain ATCC BAA-334 / TIGR4).